Reading from the N-terminus, the 187-residue chain is Casparian strip membrane protein 5 (187 aa).

The Cytoplasmic portion of the chain corresponds to 1 to 24; sequence MKSGQAEIMETSKGIQKSGLMSRR. The helical transmembrane segment at 25–45 threads the bilayer; the sequence is IAILEFILRIVAFFNTIGSAI. Topologically, residues 46–74 are extracellular; sequence LMGTTHETLPFFTQFIRFQAEYNDLPALT. The chain crosses the membrane as a helical span at residues 75–95; the sequence is FFVVANAVVSGYLILSLTLAF. The Cytoplasmic portion of the chain corresponds to 96–107; it reads VHIVKRKTQNTR. A helical membrane pass occupies residues 108–128; it reads ILLIILDVAMLGLLTSGASSA. The Extracellular segment spans residues 129–161; the sequence is AAIVYLAHNGNNKTNWFAICQQFNSFCERISGS. The N-linked (GlcNAc...) asparagine glycan is linked to Asn-140. Residues 162–182 traverse the membrane as a helical segment; that stretch reads LIGSFIAIVLLILLILLSAIA. Residues 183–187 lie on the Cytoplasmic side of the membrane; it reads LSRRH.

It belongs to the Casparian strip membrane proteins (CASP) family. Homodimer and heterodimers with other CASP proteins. Interacts with CASP1, CASP3 and CASP4.

It is found in the cell membrane. Functionally, regulates membrane-cell wall junctions and localized cell wall deposition. Required for establishment of the Casparian strip membrane domain (CSD) and the subsequent formation of Casparian strips, a cell wall modification of the root endodermis that determines an apoplastic barrier between the intraorganismal apoplasm and the extraorganismal apoplasm and prevents lateral diffusion. In Arabidopsis thaliana (Mouse-ear cress), this protein is Casparian strip membrane protein 5 (CASP5).